The primary structure comprises 361 residues: tRNA-specific 2-thiouridylase MnmA (361 aa).

ATP is bound by residues 11–18 and Met37; that span reads GMSGGVDS. Positions 97–99 are interaction with target base in tRNA; that stretch reads NPD. Residue Cys102 is the Nucleophile of the active site. Cysteines 102 and 199 form a disulfide. Position 126 (Gly126) interacts with ATP. The interval 149–151 is interaction with tRNA; it reads KDQ. Cys199 acts as the Cysteine persulfide intermediate in catalysis. An interaction with tRNA region spans residues 311 to 312; it reads RY.

This sequence belongs to the MnmA/TRMU family.

Its subcellular location is the cytoplasm. The enzyme catalyses S-sulfanyl-L-cysteinyl-[protein] + uridine(34) in tRNA + AH2 + ATP = 2-thiouridine(34) in tRNA + L-cysteinyl-[protein] + A + AMP + diphosphate + H(+). Functionally, catalyzes the 2-thiolation of uridine at the wobble position (U34) of tRNA, leading to the formation of s(2)U34. In Cupriavidus necator (strain ATCC 17699 / DSM 428 / KCTC 22496 / NCIMB 10442 / H16 / Stanier 337) (Ralstonia eutropha), this protein is tRNA-specific 2-thiouridylase MnmA.